Reading from the N-terminus, the 100-residue chain is Class II hydrophobin 4 (100 aa).

The signal sequence occupies residues 1–17 (MQFYAIASLFLAGTAFA). Cystine bridges form between Cys29/Cys79, Cys40/Cys70, Cys41/Cys53, and Cys80/Cys92.

The protein belongs to the cerato-ulmin hydrophobin family.

It is found in the secreted. Its subcellular location is the cell wall. In terms of biological role, aerial growth, conidiation, and dispersal of filamentous fungi in the environment rely upon a capability of their secreting small amphipathic proteins called hydrophobins (HPBs) with low sequence identity. Class I can self-assemble into an outermost layer of rodlet bundles on aerial cell surfaces, conferring cellular hydrophobicity that supports fungal growth, development and dispersal; whereas Class II form highly ordered films at water-air interfaces through intermolecular interactions but contribute nothing to the rodlet structure. Does not seem to be important for the ability to cause seedling disease. The protein is Class II hydrophobin 4 of Gibberella moniliformis (Maize ear and stalk rot fungus).